A 565-amino-acid polypeptide reads, in one-letter code: Proline--tRNA ligase (565 aa).

It belongs to the class-II aminoacyl-tRNA synthetase family. ProS type 1 subfamily. In terms of assembly, homodimer.

The protein resides in the cytoplasm. The enzyme catalyses tRNA(Pro) + L-proline + ATP = L-prolyl-tRNA(Pro) + AMP + diphosphate. Catalyzes the attachment of proline to tRNA(Pro) in a two-step reaction: proline is first activated by ATP to form Pro-AMP and then transferred to the acceptor end of tRNA(Pro). As ProRS can inadvertently accommodate and process non-cognate amino acids such as alanine and cysteine, to avoid such errors it has two additional distinct editing activities against alanine. One activity is designated as 'pretransfer' editing and involves the tRNA(Pro)-independent hydrolysis of activated Ala-AMP. The other activity is designated 'posttransfer' editing and involves deacylation of mischarged Ala-tRNA(Pro). The misacylated Cys-tRNA(Pro) is not edited by ProRS. This Francisella tularensis subsp. holarctica (strain FTNF002-00 / FTA) protein is Proline--tRNA ligase.